The sequence spans 228 residues: UPF0758 protein Reut_A2732 (228 aa).

One can recognise an MPN domain in the interval 102–224 (GLDSPAAVRS…VHSFAEHGEL (123 aa)). His173, His175, and Asp186 together coordinate Zn(2+). Residues 173 to 186 (HNHPSGCCTPSQSD) carry the JAMM motif motif.

The protein belongs to the UPF0758 family.

The polypeptide is UPF0758 protein Reut_A2732 (Cupriavidus pinatubonensis (strain JMP 134 / LMG 1197) (Cupriavidus necator (strain JMP 134))).